Reading from the N-terminus, the 457-residue chain is F-box/LRR-repeat protein At2g42730 (457 aa).

Residues 4 to 50 (KDVISRLPDEVLGRILSLISTKEAVSTSVLSKRWKNMFVLVSNLDID) form the F-box domain. LRR repeat units lie at residues 265–288 (MDETRMVGVRNGSLGSIPADMRNL), 292–315 (IRNVRILHLSSHTLELLYFSCKEM), and 318–343 (FDSLVSLSIGNDKARGWQMLPLLIKN).

This chain is F-box/LRR-repeat protein At2g42730, found in Arabidopsis thaliana (Mouse-ear cress).